We begin with the raw amino-acid sequence, 213 residues long: Imidazole glycerol phosphate synthase subunit HisH (213 aa).

The Glutamine amidotransferase type-1 domain occupies 3-213; that stretch reads MIGVIDYGMG…VGIVTGRENG (211 aa). The Nucleophile role is filled by cysteine 81. Residues histidine 188 and glutamate 190 contribute to the active site.

In terms of assembly, heterodimer of HisH and HisF.

It localises to the cytoplasm. The catalysed reaction is 5-[(5-phospho-1-deoxy-D-ribulos-1-ylimino)methylamino]-1-(5-phospho-beta-D-ribosyl)imidazole-4-carboxamide + L-glutamine = D-erythro-1-(imidazol-4-yl)glycerol 3-phosphate + 5-amino-1-(5-phospho-beta-D-ribosyl)imidazole-4-carboxamide + L-glutamate + H(+). It carries out the reaction L-glutamine + H2O = L-glutamate + NH4(+). The protein operates within amino-acid biosynthesis; L-histidine biosynthesis; L-histidine from 5-phospho-alpha-D-ribose 1-diphosphate: step 5/9. Functionally, IGPS catalyzes the conversion of PRFAR and glutamine to IGP, AICAR and glutamate. The HisH subunit catalyzes the hydrolysis of glutamine to glutamate and ammonia as part of the synthesis of IGP and AICAR. The resulting ammonia molecule is channeled to the active site of HisF. This Geobacillus thermodenitrificans (strain NG80-2) protein is Imidazole glycerol phosphate synthase subunit HisH.